Reading from the N-terminus, the 310-residue chain is Tagatose-6-phosphate kinase (310 aa).

The protein belongs to the carbohydrate kinase PfkB family. LacC subfamily.

The enzyme catalyses D-tagatofuranose 6-phosphate + ATP = D-tagatofuranose 1,6-bisphosphate + ADP + H(+). It participates in carbohydrate metabolism; D-tagatose 6-phosphate degradation; D-glyceraldehyde 3-phosphate and glycerone phosphate from D-tagatose 6-phosphate: step 1/2. This Lactococcus lactis subsp. lactis (Streptococcus lactis) protein is Tagatose-6-phosphate kinase.